A 251-amino-acid chain; its full sequence is uncharacterized protein (251 aa).

Residue 10–34 (ITGAGSGIGKKAAVMFAERGAKVAI) participates in NADP(+) binding. Residue Ser139 participates in substrate binding. Tyr152 serves as the catalytic Proton acceptor.

This sequence belongs to the short-chain dehydrogenases/reductases (SDR) family.

This is an uncharacterized protein from Thermotoga maritima (strain ATCC 43589 / DSM 3109 / JCM 10099 / NBRC 100826 / MSB8).